A 102-amino-acid chain; its full sequence is Small ribosomal subunit protein uS10 (102 aa).

A disordered region spans residues 35–58 (SGPIPLPTKTLEIPSRKSPDGEGT).

It belongs to the universal ribosomal protein uS10 family. Part of the 30S ribosomal subunit.

Involved in the binding of tRNA to the ribosomes. This Halorubrum lacusprofundi (strain ATCC 49239 / DSM 5036 / JCM 8891 / ACAM 34) protein is Small ribosomal subunit protein uS10.